Here is a 190-residue protein sequence, read N- to C-terminus: Nuclear transcription factor Y subunit A-7 (190 aa).

The disordered stretch occupies residues 1–33 (MTSSIHELSDNIGSHEKQEQRDSHFQPPIPSAR). Residues 7-24 (ELSDNIGSHEKQEQRDSH) show a composition bias toward basic and acidic residues. A Subunit association domain (SAD) motif is present at residues 103–126 (FVNAKQYHGILRRRQSRARLESQN). A DNA-binding region (NFYA/HAP2-type) is located at residues 133-158 (KPYLHESRHLHAIRRPRGCGGRFLNA). The disordered stretch occupies residues 147–190 (RPRGCGGRFLNAKKEDEHHEDSSHEEKSNLSAGKSAMAASSGTS). The segment covering 158–174 (AKKEDEHHEDSSHEEKS) has biased composition (basic and acidic residues). Residues 177-190 (SAGKSAMAASSGTS) show a composition bias toward low complexity.

Belongs to the NFYA/HAP2 subunit family. In terms of assembly, heterotrimeric transcription factor composed of three components, NF-YA, NF-YB and NF-YC. NF-YB and NF-YC must interact and dimerize for NF-YA association and DNA binding.

Its subcellular location is the nucleus. Stimulates the transcription of various genes by recognizing and binding to a CCAAT motif in promoters. This is Nuclear transcription factor Y subunit A-7 (NFYA7) from Arabidopsis thaliana (Mouse-ear cress).